Reading from the N-terminus, the 108-residue chain is MSVQLNAFTFILERRGWRMVCYEQLTTNGTRILHFYLKDNPTFFATYSSQFLSDTKMIRRFASWSGQLLEGSNSVFWTNITPFEPIDEETAEDIKNLDKVVEGMNFTL.

Belongs to the phi29likevirus gp16.9 family.

The protein is Gene product 16.9 (16.9) of Bacillus phage phi29 (Bacteriophage phi-29).